The chain runs to 862 residues: DNA mismatch repair protein MutS (862 aa).

621 to 628 (GPNMGGKS) contributes to the ATP binding site.

The protein belongs to the DNA mismatch repair MutS family.

This protein is involved in the repair of mismatches in DNA. It is possible that it carries out the mismatch recognition step. This protein has a weak ATPase activity. This chain is DNA mismatch repair protein MutS, found in Vibrio cholerae serotype O1 (strain ATCC 39541 / Classical Ogawa 395 / O395).